The following is a 206-amino-acid chain: Large ribosomal subunit protein uL4 (206 aa).

This sequence belongs to the universal ribosomal protein uL4 family. Part of the 50S ribosomal subunit.

In terms of biological role, one of the primary rRNA binding proteins, this protein initially binds near the 5'-end of the 23S rRNA. It is important during the early stages of 50S assembly. It makes multiple contacts with different domains of the 23S rRNA in the assembled 50S subunit and ribosome. Functionally, forms part of the polypeptide exit tunnel. This chain is Large ribosomal subunit protein uL4, found in Methylobacterium radiotolerans (strain ATCC 27329 / DSM 1819 / JCM 2831 / NBRC 15690 / NCIMB 10815 / 0-1).